An 89-amino-acid polypeptide reads, in one-letter code: Small ribosomal subunit protein uS15 (89 aa).

The protein belongs to the universal ribosomal protein uS15 family. As to quaternary structure, part of the 30S ribosomal subunit. Forms a bridge to the 50S subunit in the 70S ribosome, contacting the 23S rRNA.

Its function is as follows. One of the primary rRNA binding proteins, it binds directly to 16S rRNA where it helps nucleate assembly of the platform of the 30S subunit by binding and bridging several RNA helices of the 16S rRNA. In terms of biological role, forms an intersubunit bridge (bridge B4) with the 23S rRNA of the 50S subunit in the ribosome. This chain is Small ribosomal subunit protein uS15, found in Chlamydia abortus (strain DSM 27085 / S26/3) (Chlamydophila abortus).